A 267-amino-acid polypeptide reads, in one-letter code: Octanoyltransferase (267 aa).

Positions 1-30 are disordered; the sequence is MPTGKLRQKPPYAAIMTNSPVTPSTETQQP. Residues 16–28 show a composition bias toward polar residues; it reads MTNSPVTPSTETQ. In terms of domain architecture, BPL/LPL catalytic spans 77-265; it reads GTASELVWLV…AFESVFGPRQ (189 aa). Residues 116 to 123, 196 to 198, and 209 to 211 each bind substrate; these read RGGEYTYH, AIG, and GIA. Catalysis depends on Cys-227, which acts as the Acyl-thioester intermediate.

Belongs to the LipB family.

The protein localises to the cytoplasm. It carries out the reaction octanoyl-[ACP] + L-lysyl-[protein] = N(6)-octanoyl-L-lysyl-[protein] + holo-[ACP] + H(+). It functions in the pathway protein modification; protein lipoylation via endogenous pathway; protein N(6)-(lipoyl)lysine from octanoyl-[acyl-carrier-protein]: step 1/2. Catalyzes the transfer of endogenously produced octanoic acid from octanoyl-acyl-carrier-protein onto the lipoyl domains of lipoate-dependent enzymes. Lipoyl-ACP can also act as a substrate although octanoyl-ACP is likely to be the physiological substrate. The chain is Octanoyltransferase from Brucella abortus biovar 1 (strain 9-941).